We begin with the raw amino-acid sequence, 601 residues long: Casbene synthase, chloroplastic (601 aa).

The transit peptide at 1–56 (MALPSAAMQSNPEKLNLFHRLSSLPTTSLEYGNNRFPFFSSSAKSHFKKPTQACLS) directs the protein to the chloroplast. Mg(2+)-binding residues include Asp355, Asp359, Asn499, Ser503, and Glu507. The DDXXD motif motif lies at 355-359 (DDTID).

Belongs to the terpene synthase family. The cofactor is Mg(2+).

It localises to the plastid. The protein localises to the chloroplast. The catalysed reaction is (2E,6E,10E)-geranylgeranyl diphosphate = casbene + diphosphate. Its function is as follows. Catalyzes the cyclization of geranylgeranyl diphosphate to casbene, a diterpene phytoalexin with antibacterial and antifungal activity. The polypeptide is Casbene synthase, chloroplastic (Ricinus communis (Castor bean)).